Consider the following 429-residue polypeptide: Putative pentatricopeptide repeat-containing protein At1g03510 (429 aa).

PPR repeat units follow at residues 11–45 (KLIS…FALP), 47–81 (DAHV…NFLS), 82–112 (NPFV…IPQR), 113–147 (NAVV…PNES), 148–180 (SFNA…RFKP), 181–215 (NLIT…LIEP), 216–246 (HPQL…MEDR), 247–281 (DVVA…KVTP), 282–312 (DDIA…MQGD), and 318–348 (SKDH…MPEK). The type E motif stretch occupies residues 353 to 428 (TWGALLGACR…SPGSSWCLFK (76 aa)).

Belongs to the PPR family. PCMP-E subfamily.

This chain is Putative pentatricopeptide repeat-containing protein At1g03510 (PCMP-E3), found in Arabidopsis thaliana (Mouse-ear cress).